We begin with the raw amino-acid sequence, 146 residues long: 3-hydroxyacyl-[acyl-carrier-protein] dehydratase FabZ (146 aa).

The active site involves His47.

Belongs to the thioester dehydratase family. FabZ subfamily.

It localises to the cytoplasm. It carries out the reaction a (3R)-hydroxyacyl-[ACP] = a (2E)-enoyl-[ACP] + H2O. Its function is as follows. Involved in unsaturated fatty acids biosynthesis. Catalyzes the dehydration of short chain beta-hydroxyacyl-ACPs and long chain saturated and unsaturated beta-hydroxyacyl-ACPs. The chain is 3-hydroxyacyl-[acyl-carrier-protein] dehydratase FabZ from Nitrosospira multiformis (strain ATCC 25196 / NCIMB 11849 / C 71).